Consider the following 147-residue polypeptide: Large ribosomal subunit protein uL15 (147 aa).

The tract at residues 1-62 (MKLHELKPAQ…GQQPLSRRMP (62 aa)) is disordered. 2 stretches are compositionally biased toward gly residues: residues 21–31 (RGIGSGTGKTS) and 42–52 (AGGGVRPGFEG).

Belongs to the universal ribosomal protein uL15 family. Part of the 50S ribosomal subunit.

In terms of biological role, binds to the 23S rRNA. This Desulfitobacterium hafniense (strain DSM 10664 / DCB-2) protein is Large ribosomal subunit protein uL15.